We begin with the raw amino-acid sequence, 263 residues long: Phosphate import ATP-binding protein PstB (263 aa).

One can recognise an ABC transporter domain in the interval 17-258 (ISVKNLDFFY…PKRKETEDYI (242 aa)). Residue 49–56 (GPSGCGKS) coordinates ATP.

The protein belongs to the ABC transporter superfamily. Phosphate importer (TC 3.A.1.7) family. The complex is composed of two ATP-binding proteins (PstB), two transmembrane proteins (PstC and PstA) and a solute-binding protein (PstS).

It is found in the cell inner membrane. It carries out the reaction phosphate(out) + ATP + H2O = ADP + 2 phosphate(in) + H(+). Its function is as follows. Part of the ABC transporter complex PstSACB involved in phosphate import. Responsible for energy coupling to the transport system. The sequence is that of Phosphate import ATP-binding protein PstB from Polaromonas sp. (strain JS666 / ATCC BAA-500).